The primary structure comprises 55 residues: MAVPKKRTSKSKKNARKANWKRKGYKAAQKSLSLAKSMLKGKTTSFVYSIYVDDE.

The segment at 1 to 24 (MAVPKKRTSKSKKNARKANWKRKG) is disordered.

The protein belongs to the bacterial ribosomal protein bL32 family.

Its subcellular location is the plastid. It localises to the chloroplast. The sequence is that of Large ribosomal subunit protein bL32c from Phaeodactylum tricornutum (strain CCAP 1055/1).